We begin with the raw amino-acid sequence, 449 residues long: 23S rRNA (uracil(1939)-C(5))-methyltransferase RlmD (449 aa).

A TRAM domain is found at 1–66 (MGRSRHHNKL…AKFDEAKVVE (66 aa)). [4Fe-4S] cluster is bound by residues C79, C85, C88, and C169. The S-adenosyl-L-methionine site is built by Q280, F309, N314, E330, N357, and D379. C405 functions as the Nucleophile in the catalytic mechanism.

The protein belongs to the class I-like SAM-binding methyltransferase superfamily. RNA M5U methyltransferase family. RlmD subfamily.

It catalyses the reaction uridine(1939) in 23S rRNA + S-adenosyl-L-methionine = 5-methyluridine(1939) in 23S rRNA + S-adenosyl-L-homocysteine + H(+). In terms of biological role, catalyzes the formation of 5-methyl-uridine at position 1939 (m5U1939) in 23S rRNA. This is 23S rRNA (uracil(1939)-C(5))-methyltransferase RlmD from Francisella tularensis subsp. tularensis (strain FSC 198).